The following is a 56-amino-acid chain: uncharacterized protein (56 aa).

This is an uncharacterized protein from Bacillus subtilis (strain 168).